Here is a 252-residue protein sequence, read N- to C-terminus: Intraflagellar transport associated protein 2 (252 aa).

GTP-binding positions include 35–42 (GPPKAGKT) and 118–125 (WDVSGDKK).

This sequence belongs to the small GTPase superfamily. Rab family. In terms of assembly, component of the IFT complex B composed of at least che-2, che-13, dyf-1, dyf-3, dyf-6, dyf-11, dyf-13, ift-20, ift-74, ift-81, ifta-2, osm-1, osm-5 and osm-6. Ciliated sensory neurons.

It localises to the cytoplasm. Its subcellular location is the cytoskeleton. The protein localises to the cilium axoneme. Functionally, component of the intraflagellar transport (IFT) complex B required for transport of proteins in the motile cilium. May be required for ciliary entrance and transport of specific ciliary cargo proteins such as che-3 which are related to motility. Regulates specific signaling activities in the cilia, such as the daf-2/insulin receptor-like transduction pathway. The protein is Intraflagellar transport associated protein 2 of Caenorhabditis elegans.